The chain runs to 160 residues: Prostaglandin E synthase 3 (160 aa).

One can recognise a CS domain in the interval 1–90 (MQPASAKWYD…ESGQSWPRLT (90 aa)). Lys33 is modified (N6-acetyllysine). Lys35 participates in a covalent cross-link: Glycyl lysine isopeptide (Lys-Gly) (interchain with G-Cter in SUMO2). Residue Ser44 is modified to Phosphoserine. A Glycyl lysine isopeptide (Lys-Gly) (interchain with G-Cter in SUMO2) cross-link involves residue Lys65. Phosphoserine is present on residues Ser85, Ser100, Ser113, Ser118, Ser148, and Ser151. The segment at 124-160 (SEMMNNMGGDEDVDLPEVDGADDDSQDSDDEKMPDLE) is disordered. Residues 132–153 (GDEDVDLPEVDGADDDSQDSDD) are compositionally biased toward acidic residues. The PXLE motif signature appears at 157–160 (PDLE).

This sequence belongs to the p23/wos2 family. As to quaternary structure, probably forms a complex composed of chaperones HSP90 and HSP70, co-chaperones STIP1/HOP, CDC37, PPP5C, PTGES3/p23, TSC1 and client protein TSC2. Binds to the progesterone receptor. Interacts with TERT; the interaction, together with HSP90AA1, is required for correct assembly and stabilization of the telomerase holoenzyme complex. Interacts (via PXLE motif) with EGLN1/PHD2, recruiting EGLN1/PHD2 to the HSP90 pathway to facilitate HIF alpha proteins hydroxylation. Interacts with HSP90AA1, FLCN, FNIP1 and FNIP2. Post-translationally, proteolytically cleaved by caspase-7 (CASP7) in response to apoptosis, leading to its inactivation. Detected in testis and ovary, at lower levels in endometrium, myometrium, kidney and lung, and only faintly in spleen, heart and muscle (at protein level). Expressed at high levels in glandular and luminal epithelial cells of the endometrium, but also detected in stromal cells (at protein level).

It localises to the cytoplasm. It carries out the reaction prostaglandin H2 = prostaglandin E2. Its pathway is lipid metabolism; prostaglandin biosynthesis. In terms of biological role, cytosolic prostaglandin synthase that catalyzes the oxidoreduction of prostaglandin endoperoxide H2 (PGH2) to prostaglandin E2 (PGE2). Molecular chaperone that localizes to genomic response elements in a hormone-dependent manner and disrupts receptor-mediated transcriptional activation, by promoting disassembly of transcriptional regulatory complexes. Facilitates HIF alpha proteins hydroxylation via interaction with EGLN1/PHD2, leading to recruit EGLN1/PHD2 to the HSP90 pathway. This is Prostaglandin E synthase 3 (PTGES3) from Bos taurus (Bovine).